Reading from the N-terminus, the 458-residue chain is Histone acetyltransferase Tip60 homolog (458 aa).

Residues 1 to 24 form a disordered region; it reads MTEPKKEIIEDENHGISKKIPTDP. The Tudor-knot domain occupies 30-86; that stretch reads VTEGCRLLVMMASQEEERWAEVISRCRAANGSIKFYVHYIDCNRRLDEWVQSDRLNL. The tract at residues 94 to 123 is disordered; it reads KGGKKGAHLREENRDSNENEGKKSGRKRKI. Residues 101–116 are compositionally biased toward basic and acidic residues; that stretch reads HLREENRDSNENEGKK. Residues 168 to 446 enclose the MYST-type HAT domain; it reads TRIRNVECIE…INPAALQWRP (279 aa). A C2HC MYST-type zinc finger spans residues 201-226; the sequence is IYICEFCLKYLKSKTCLKRHMEKCAM. N6-acetyllysine; by autocatalysis is present on Lys268. Residues 311–313 and 318–324 each bind acetyl-CoA; these read ILV and QKKGYGS. Glu344 functions as the Proton donor/acceptor in the catalytic mechanism. The acetyl-CoA site is built by Ser348 and Ser357.

Belongs to the MYST (SAS/MOZ) family. In terms of assembly, interacts with transcription-associated protein trr-1. Probably a component of a complex with histone acetyltransferase (HAT) activity, at least composed of mys-1 and trr-1. In terms of processing, autoacetylation at Lys-268 is required for binding histones with high affinity and for proper function.

It localises to the nucleus. It catalyses the reaction L-lysyl-[protein] + acetyl-CoA = N(6)-acetyl-L-lysyl-[protein] + CoA + H(+). In terms of biological role, probable catalytic subunit of the Tip60 chromatin-remodeling complex. Plays a role in acetylation of nucleosomal histone H4 and perhaps also H2A, probably acting as a component of the Tip60 histone acetyltransferase complex. Acts in the determination of vulval and distal tip cell (DTC) precursor cell fates. Involved in the positive regulation of transcription factor daf-16, probably acting by histone acetylation; thereby modulating stress resistance. The chain is Histone acetyltransferase Tip60 homolog from Caenorhabditis elegans.